The sequence spans 273 residues: Protein PERCC1 (273 aa).

Disordered regions lie at residues 18–84 (SHES…PETP) and 253–273 (GGSE…LAEV). A compositionally biased stretch (acidic residues) spans 28–56 (EAPEISEEEEEEEEEEEEEEEEEEVDQDQ). Residues 67-83 (DSQSSGVVPQDPSSPET) show a composition bias toward polar residues.

As to expression, specifically expressed in the stomach, pancreas and intestine. In gastrointestinal tissue, expression is primarily restricted to gastric G cells and duodenal enteroendocrine cells (EECs).

Plays a critical role in intestinal function by promoting the development of enteroendocrine cells (EECs) of the gastrointestinal tract and pancreas. It is thereby required for normal enteroendocrine peptide hormone secretion. This chain is Protein PERCC1, found in Mus musculus (Mouse).